A 787-amino-acid chain; its full sequence is Formate acetyltransferase (787 aa).

One can recognise a PFL domain in the interval 8–629 (NIFEQAWDGF…GNSPVHKGVF (622 aa)). The S-acetylcysteine intermediate role is filled by Cys416. Cys417 (cysteine radical intermediate) is an active-site residue. A Glycine radical domain is found at 645-774 (SPGANPSNKA…LTERVFHEVL (130 aa)). Gly749 bears the Glycine radical mark.

Belongs to the glycyl radical enzyme (GRE) family. PFL subfamily. As to quaternary structure, homodimer.

Its subcellular location is the cytoplasm. The catalysed reaction is formate + acetyl-CoA = pyruvate + CoA. It functions in the pathway fermentation; pyruvate fermentation; formate from pyruvate: step 1/1. The polypeptide is Formate acetyltransferase (pfl) (Lactococcus lactis subsp. lactis (strain IL1403) (Streptococcus lactis)).